The chain runs to 272 residues: MMLGLENKLKLYGFNNLTKTLSFNIYDVCYAKSEREQKDYIAYIDEQYNSERLTNILCDVTKMIGAHVLNISKQDYDPQGASVTILISEETLAVKEIDKSCNLGQIDILNTRDTIVGHLDKSHVTVHTYPEYHPDNSIATFRVDIDVSTCGEVSPLNALNYLIGSFDSDIITIDYRVRGFTRDVDGKKLFIDHKITSIQDYIDENTLKRYDAMDINVYQSNIFHTKMLIKEIELQNYLFNRDVYEIKPKQRLEIENNLRKEMIEIFSGTNIY.

S122 acts as the Schiff-base intermediate with substrate; via pyruvic acid in catalysis. S122 carries the pyruvic acid (Ser); by autocatalysis modification. H127 acts as the Proton acceptor; for processing activity in catalysis. C150 functions as the Proton donor; for catalytic activity in the catalytic mechanism.

The protein belongs to the prokaryotic AdoMetDC family. Type 2 subfamily. In terms of assembly, heterooctamer of four alpha and four beta chains arranged as a tetramer of alpha/beta heterodimers. Pyruvate serves as cofactor. In terms of processing, is synthesized initially as an inactive proenzyme. Formation of the active enzyme involves a self-maturation process in which the active site pyruvoyl group is generated from an internal serine residue via an autocatalytic post-translational modification. Two non-identical subunits are generated from the proenzyme in this reaction, and the pyruvate is formed at the N-terminus of the alpha chain, which is derived from the carboxyl end of the proenzyme. The post-translation cleavage follows an unusual pathway, termed non-hydrolytic serinolysis, in which the side chain hydroxyl group of the serine supplies its oxygen atom to form the C-terminus of the beta chain, while the remainder of the serine residue undergoes an oxidative deamination to produce ammonia and the pyruvoyl group blocking the N-terminus of the alpha chain.

The catalysed reaction is S-adenosyl-L-methionine + H(+) = S-adenosyl 3-(methylsulfanyl)propylamine + CO2. Its pathway is amine and polyamine biosynthesis; S-adenosylmethioninamine biosynthesis; S-adenosylmethioninamine from S-adenosyl-L-methionine: step 1/1. In terms of biological role, catalyzes the decarboxylation of S-adenosylmethionine to S-adenosylmethioninamine (dcAdoMet), the propylamine donor required for the synthesis of the polyamines spermine and spermidine from the diamine putrescine. This Clostridium botulinum (strain Eklund 17B / Type B) protein is S-adenosylmethionine decarboxylase proenzyme.